Here is a 205-residue protein sequence, read N- to C-terminus: MTKRAEAKYKIDRRMGQNIWGRPKSPVNRREYGPGQHGQRRKGKLSDFGVQLRAKQKLKGYYANISERQFHAIYVEATRLKGDSGENLIGLLERRLDAVVYRAKFVSTMFAARQFINHGHIKVNGKRVNIPSYKVRVGDVIEVKEASKQLAFVLEASQLAERDVPDYIEVDHNKMTAKFARIPALSDVPFAVQMEPHLIVEFYSR.

The segment at 19–45 (IWGRPKSPVNRREYGPGQHGQRRKGKL) is disordered. Residues 94–157 (RRLDAVVYRA…KQLAFVLEAS (64 aa)) form the S4 RNA-binding domain.

Part of the 30S ribosomal subunit. Contacts protein S5. The interaction surface between S4 and S5 is involved in control of translational fidelity. In terms of processing, may be methylated on an undetermined residue.

Its function is as follows. One of the primary rRNA binding proteins, it binds directly to 16S rRNA where it nucleates assembly of the body of the 30S subunit. In terms of biological role, with S5 and S12 plays an important role in translational accuracy. The polypeptide is Small ribosomal subunit protein uS4 (Rhodopseudomonas palustris (strain ATCC BAA-98 / CGA009)).